A 194-amino-acid chain; its full sequence is Peptidyl-tRNA hydrolase (194 aa).

Tyr17 serves as a coordination point for tRNA. The Proton acceptor role is filled by His22. Positions 68, 70, and 116 each coordinate tRNA.

The protein belongs to the PTH family. Monomer.

It localises to the cytoplasm. The enzyme catalyses an N-acyl-L-alpha-aminoacyl-tRNA + H2O = an N-acyl-L-amino acid + a tRNA + H(+). Its function is as follows. Hydrolyzes ribosome-free peptidyl-tRNAs (with 1 or more amino acids incorporated), which drop off the ribosome during protein synthesis, or as a result of ribosome stalling. Catalyzes the release of premature peptidyl moieties from peptidyl-tRNA molecules trapped in stalled 50S ribosomal subunits, and thus maintains levels of free tRNAs and 50S ribosomes. The protein is Peptidyl-tRNA hydrolase of Pseudomonas fluorescens (strain ATCC BAA-477 / NRRL B-23932 / Pf-5).